A 242-amino-acid chain; its full sequence is Carboxy-S-adenosyl-L-methionine synthase (242 aa).

S-adenosyl-L-methionine is bound by residues tyrosine 39, 64-66 (GCS), 89-90 (DN), 117-118 (DI), asparagine 132, and arginine 199.

The protein belongs to the class I-like SAM-binding methyltransferase superfamily. Cx-SAM synthase family. In terms of assembly, homodimer.

The catalysed reaction is prephenate + S-adenosyl-L-methionine = carboxy-S-adenosyl-L-methionine + 3-phenylpyruvate + H2O. Catalyzes the conversion of S-adenosyl-L-methionine (SAM) to carboxy-S-adenosyl-L-methionine (Cx-SAM). The polypeptide is Carboxy-S-adenosyl-L-methionine synthase (Vibrio atlanticus (strain LGP32) (Vibrio splendidus (strain Mel32))).